The sequence spans 570 residues: Adenine deaminase (570 aa).

Belongs to the metallo-dependent hydrolases superfamily. Adenine deaminase family. The cofactor is Mn(2+).

It catalyses the reaction adenine + H2O + H(+) = hypoxanthine + NH4(+). This Oleidesulfovibrio alaskensis (strain ATCC BAA-1058 / DSM 17464 / G20) (Desulfovibrio alaskensis) protein is Adenine deaminase.